A 148-amino-acid polypeptide reads, in one-letter code: Small ribosomal subunit protein uS15 (148 aa).

The segment covering 1-14 has biased composition (basic residues); that stretch reads MGRLHSHRHGKSHS. The disordered stretch occupies residues 1 to 27; sequence MGRLHSHRHGKSHSIRPSSPKAPSWIQ.

This sequence belongs to the universal ribosomal protein uS15 family. In terms of assembly, part of the 30S ribosomal subunit.

In Cenarchaeum symbiosum (strain A), this protein is Small ribosomal subunit protein uS15.